Consider the following 984-residue polypeptide: Valine--tRNA ligase (984 aa).

The 'HIGH' region motif lies at 65 to 75 (PNVTGSLHMGH). The 'KMSKS' region motif lies at 579-583 (KMSKS). An ATP-binding site is contributed by Lys582. Residues 954 to 984 (VEVVDAEKAKLAELEGQLTAMTAQMEELKNL) adopt a coiled-coil conformation.

The protein belongs to the class-I aminoacyl-tRNA synthetase family. ValS type 1 subfamily. Monomer.

It localises to the cytoplasm. The catalysed reaction is tRNA(Val) + L-valine + ATP = L-valyl-tRNA(Val) + AMP + diphosphate. Catalyzes the attachment of valine to tRNA(Val). As ValRS can inadvertently accommodate and process structurally similar amino acids such as threonine, to avoid such errors, it has a 'posttransfer' editing activity that hydrolyzes mischarged Thr-tRNA(Val) in a tRNA-dependent manner. The polypeptide is Valine--tRNA ligase (Psychrobacter arcticus (strain DSM 17307 / VKM B-2377 / 273-4)).